A 601-amino-acid chain; its full sequence is Potassium-transporting ATPase potassium-binding subunit (601 aa).

A run of 12 helical transmembrane segments spans residues 3–23 (ASAW…AWPL), 62–82 (HYAL…YALQ), 132–152 (LGLS…AFAL), 179–199 (AWVL…QGVI), 283–303 (LTNL…CFAF), 314–334 (VAIL…VTAA), 367–387 (FGIS…CGAV), 397–417 (LGGM…GGAG), 419–439 (GLYG…LMIG), 459–479 (VAIL…VLAP), 523–543 (VLLA…VLAI), and 564–584 (GPLF…LNYV).

Belongs to the KdpA family. As to quaternary structure, the system is composed of three essential subunits: KdpA, KdpB and KdpC.

The protein resides in the cell inner membrane. Functionally, part of the high-affinity ATP-driven potassium transport (or Kdp) system, which catalyzes the hydrolysis of ATP coupled with the electrogenic transport of potassium into the cytoplasm. This subunit binds the periplasmic potassium ions and delivers the ions to the membrane domain of KdpB through an intramembrane tunnel. This Paracidovorax citrulli (strain AAC00-1) (Acidovorax citrulli) protein is Potassium-transporting ATPase potassium-binding subunit.